A 289-amino-acid polypeptide reads, in one-letter code: ATP synthase gamma chain (289 aa).

The protein belongs to the ATPase gamma chain family. As to quaternary structure, F-type ATPases have 2 components, CF(1) - the catalytic core - and CF(0) - the membrane proton channel. CF(1) has five subunits: alpha(3), beta(3), gamma(1), delta(1), epsilon(1). CF(0) has three main subunits: a, b and c.

It is found in the cell inner membrane. Functionally, produces ATP from ADP in the presence of a proton gradient across the membrane. The gamma chain is believed to be important in regulating ATPase activity and the flow of protons through the CF(0) complex. The sequence is that of ATP synthase gamma chain from Mannheimia succiniciproducens (strain KCTC 0769BP / MBEL55E).